Consider the following 618-residue polypeptide: Proline--tRNA ligase (618 aa).

The protein belongs to the class-II aminoacyl-tRNA synthetase family. ProS type 1 subfamily. Homodimer.

The protein localises to the cytoplasm. The enzyme catalyses tRNA(Pro) + L-proline + ATP = L-prolyl-tRNA(Pro) + AMP + diphosphate. In terms of biological role, catalyzes the attachment of proline to tRNA(Pro) in a two-step reaction: proline is first activated by ATP to form Pro-AMP and then transferred to the acceptor end of tRNA(Pro). As ProRS can inadvertently accommodate and process non-cognate amino acids such as alanine and cysteine, to avoid such errors it has two additional distinct editing activities against alanine. One activity is designated as 'pretransfer' editing and involves the tRNA(Pro)-independent hydrolysis of activated Ala-AMP. The other activity is designated 'posttransfer' editing and involves deacylation of mischarged Ala-tRNA(Pro). The misacylated Cys-tRNA(Pro) is not edited by ProRS. The protein is Proline--tRNA ligase of Streptococcus pyogenes serotype M12 (strain MGAS2096).